Reading from the N-terminus, the 790-residue chain is Endonuclease MutS2 (790 aa).

334–341 (GPNTGGKT) contributes to the ATP binding site. The region spanning 713–788 (LDVRGMTLDD…GDGVTIVELH (76 aa)) is the Smr domain.

Belongs to the DNA mismatch repair MutS family. MutS2 subfamily. In terms of assembly, homodimer. Binds to stalled ribosomes, contacting rRNA.

Endonuclease that is involved in the suppression of homologous recombination and thus may have a key role in the control of bacterial genetic diversity. In terms of biological role, acts as a ribosome collision sensor, splitting the ribosome into its 2 subunits. Detects stalled/collided 70S ribosomes which it binds and splits by an ATP-hydrolysis driven conformational change. Acts upstream of the ribosome quality control system (RQC), a ribosome-associated complex that mediates the extraction of incompletely synthesized nascent chains from stalled ribosomes and their subsequent degradation. Probably generates substrates for RQC. The chain is Endonuclease MutS2 from Caldanaerobacter subterraneus subsp. tengcongensis (strain DSM 15242 / JCM 11007 / NBRC 100824 / MB4) (Thermoanaerobacter tengcongensis).